Reading from the N-terminus, the 272-residue chain is UPF0759 protein YecE (272 aa).

The protein belongs to the UPF0759 family.

This is UPF0759 protein YecE (yecE) from Escherichia coli O157:H7.